The sequence spans 156 residues: Arginine repressor (156 aa).

It belongs to the ArgR family.

The protein localises to the cytoplasm. The protein operates within amino-acid biosynthesis; L-arginine biosynthesis [regulation]. In terms of biological role, regulates arginine biosynthesis genes. The sequence is that of Arginine repressor from Shewanella loihica (strain ATCC BAA-1088 / PV-4).